Here is a 53-residue protein sequence, read N- to C-terminus: HOXB-AS3 peptide (53 aa).

The segment at 1–53 (MPVLPGTQRYPHQRRRFQAAGGGAESGKRGSEEAPGVAWSGSESGRDAATPAW) is disordered.

In terms of assembly, interacts with HNRNPA1 (via the RGG-box). Interacts with IGF2BP2.

Functionally, blocks the binding of HNRNPA1 to the intronic sequences flanking exon 9 of the PKM gene by competitively binding to the HNRNPA1 RGG-box motif. This inhibits inclusion of exon 9 and promotes inclusion of exon 10, suppressing formation of the PKM M2 isoform and promoting production of the M1 isoform. Also suppresses HNRNPA1-mediated processing of microRNA 18a (miR-18a). Promotes MYC stability through interaction with IGF2BP2. This chain is HOXB-AS3 peptide, found in Homo sapiens (Human).